A 986-amino-acid polypeptide reads, in one-letter code: Translation initiation factor IF-2 (986 aa).

Residues 47-388 (SAPAQTPHKE…RSKGRKGKYE (342 aa)) form a disordered region. A compositionally biased stretch (basic and acidic residues) spans 53–64 (PHKEVSQEEVRV). Residues 78–94 (PEAASAEAASAPAAQEE) are compositionally biased toward low complexity. Residues 95 to 113 (APQKAEPEKVEAEKAEAPK) are compositionally biased toward basic and acidic residues. Composition is skewed to low complexity over residues 127–141 (EAAP…PAEA) and 153–214 (APVA…QAPA). Composition is skewed to basic and acidic residues over residues 215–225 (KAEEQEPEKAT) and 268–278 (GVERPGTERPA). Residues 286–300 (PAGAPGRPGERPTTG) are compositionally biased toward low complexity. Residues 358–374 (GKKDSFKDILDKRERVF) are compositionally biased toward basic and acidic residues. One can recognise a tr-type G domain in the interval 486-653 (KRPPVVTIMG…MVLLQADVLE (168 aa)). Residues 495-502 (GHVDHGKT) form a G1 region. GTP is bound at residue 495–502 (GHVDHGKT). The tract at residues 520-524 (GITQH) is G2. The segment at 541-544 (DTPG) is G3. Residues 541–545 (DTPGH) and 595–598 (NKID) each bind GTP. Positions 595–598 (NKID) are G4. A G5 region spans residues 631-633 (SAK).

Belongs to the TRAFAC class translation factor GTPase superfamily. Classic translation factor GTPase family. IF-2 subfamily.

It is found in the cytoplasm. Its function is as follows. One of the essential components for the initiation of protein synthesis. Protects formylmethionyl-tRNA from spontaneous hydrolysis and promotes its binding to the 30S ribosomal subunits. Also involved in the hydrolysis of GTP during the formation of the 70S ribosomal complex. The sequence is that of Translation initiation factor IF-2 from Citrifermentans bemidjiense (strain ATCC BAA-1014 / DSM 16622 / JCM 12645 / Bem) (Geobacter bemidjiensis).